The primary structure comprises 257 residues: Chymotrypsin-like protease VLCTLP (257 aa).

Positions 1 to 18 (MVLIRVLANLLLLQLSYA) are cleaved as a signal peptide. Positions 19–24 (QKSSEL) are excised as a propeptide. The 224-residue stretch at 25 to 248 (VVGGDECNIN…YSDWIQSIIA (224 aa)) folds into the Peptidase S1 domain. 6 disulfide bridges follow: Cys31–Cys162, Cys49–Cys65, Cys97–Cys255, Cys141–Cys209, Cys173–Cys188, and Cys199–Cys224. An N-linked (GlcNAc...) asparagine glycan is attached at Asn44. His64 acts as the Charge relay system in catalysis. Asn100 carries N-linked (GlcNAc...) asparagine glycosylation. Catalysis depends on Asp109, which acts as the Charge relay system. Residues Asn116 and Asn153 are each glycosylated (N-linked (GlcNAc...) asparagine). Catalysis depends on Ser203, which acts as the Charge relay system. An N-linked (GlcNAc...) asparagine glycan is attached at Asn250.

It belongs to the peptidase S1 family. Snake venom subfamily. As to quaternary structure, monomer. Post-translationally, partial deglycosylation has not effect on enzyme activity. As to expression, expressed by the venom gland.

It localises to the secreted. With respect to regulation, inhibited by PMSF. Functionally, snake venom serine protease with tyrosine-specific chymotrypsin-like activity. Hydrolyzes the N-acetyl-L-tyrosine ethyl ester (ATEE). Has weak fibrinogenolytic activity. Weakly hydrolyzes azocasein, Aalpha-chain (FGA) and more slowly Bbeta-chain (FGB) of fibrinogen. Optimal substrates are angiotensins I and II (AGT). This chain is Chymotrypsin-like protease VLCTLP, found in Macrovipera lebetinus (Levantine viper).